Here is a 90-residue protein sequence, read N- to C-terminus: DNA-binding protein HRm (90 aa).

The protein belongs to the bacterial histone-like protein family.

Functionally, histone-like DNA-binding protein which is capable of wrapping DNA to stabilize it, and thus to prevent its denaturation under extreme environmental conditions. The polypeptide is DNA-binding protein HRm (hupB) (Rhizobium meliloti (strain 1021) (Ensifer meliloti)).